A 230-amino-acid chain; its full sequence is Lactate utilization protein C (230 aa).

It belongs to the LutC/YkgG family.

Is involved in L-lactate degradation and allows cells to grow with lactate as the sole carbon source. The chain is Lactate utilization protein C from Exiguobacterium sp. (strain ATCC BAA-1283 / AT1b).